Reading from the N-terminus, the 41-residue chain is Large ribosomal subunit protein bL36 (41 aa).

Belongs to the bacterial ribosomal protein bL36 family.

In Azorhizobium caulinodans (strain ATCC 43989 / DSM 5975 / JCM 20966 / LMG 6465 / NBRC 14845 / NCIMB 13405 / ORS 571), this protein is Large ribosomal subunit protein bL36.